The following is a 579-amino-acid chain: MAQISKCSSLSTELNESSIISHHHGNLWDDDFIQSLKSSNGAPQYHERAEKLVEEIKNLVVSEMKDCNDDLIRHLQMVDIFECLGIDRHFQNEIQVALDYVYRYWNELEGIGIGSRDSLIKDFNATALGFRALRLHRYNVSSDVLENFKNENGQFFCSSTVEEKEVRCMLTLFRASEISFPGEKVMDEAKAFTTEYLTKVLTGVDVTDVDQSLLREVKYALEFPWHCSLPRWEARNFIEICGQNDSWLKSIMNKRVLELAKLDFNILQCAHHRELQLLSRCWWSQSDIAQQNFYRKRHVEFYFWVVIGTFEPEFSTCRITFAKIATLMTILDDLYDTHGTLEQLKIFTEGVKRWDLSLVDSLPDYIKITFEFFLNTSNELIAEVAKTQERDMSAYIRKTWERYLEAYMQEAEWITAGHVPTFDEYMKNGISSSGMCILNLYSLLLMGQLLPDDVLEQIHSPSKIHELVELTARLVDDSKDFETNKVGGELASGIECYVKDNPECTLEDASNHLNGLLDLTVKELNWEFVRHDSVALCFKKFAFNVARGLRLIYKYRDGFDVSNQEMKTHIFKILIDPLT.

Asp-332, Asp-336, Asp-476, and Asn-484 together coordinate Mg(2+). The DDXXD motif motif lies at Asp-332–Asp-336.

It belongs to the terpene synthase family. Tpsd subfamily. Mg(2+) serves as cofactor. It depends on Mn(2+) as a cofactor.

The enzyme catalyses (2E,6E)-farnesyl diphosphate = alpha-longipinene + diphosphate. The protein operates within sesquiterpene biosynthesis. It functions in the pathway terpene metabolism; oleoresin biosynthesis. Functionally, terpene synthase (TPS) involved in the biosynthesis of sesquiterpene natural products included in conifer oleoresin secretions and volatile emissions; these compounds contribute to biotic and abiotic stress defense against herbivores and pathogens. Catalyzes the conversion of (2E,6E)-farnesyl diphosphate (FPP) to alpha-longipinene. The chain is Alpha-longipinene synthase from Picea sitchensis (Sitka spruce).